A 425-amino-acid chain; its full sequence is Histidine--tRNA ligase (425 aa).

The protein belongs to the class-II aminoacyl-tRNA synthetase family. Homodimer.

Its subcellular location is the cytoplasm. It carries out the reaction tRNA(His) + L-histidine + ATP = L-histidyl-tRNA(His) + AMP + diphosphate + H(+). In Streptomyces coelicolor (strain ATCC BAA-471 / A3(2) / M145), this protein is Histidine--tRNA ligase.